Here is a 267-residue protein sequence, read N- to C-terminus: 4-hydroxy-tetrahydrodipicolinate reductase (267 aa).

10–15 (GCLGKQ) contacts NAD(+). Residue Arg37 coordinates NADP(+). NAD(+) is bound by residues 99 to 101 (GTT) and 122 to 125 (TTNV). The active-site Proton donor/acceptor is His154. His155 contributes to the (S)-2,3,4,5-tetrahydrodipicolinate binding site. Catalysis depends on Lys158, which acts as the Proton donor. Position 164-165 (164-165 (GT)) interacts with (S)-2,3,4,5-tetrahydrodipicolinate.

It belongs to the DapB family.

The protein resides in the cytoplasm. The catalysed reaction is (S)-2,3,4,5-tetrahydrodipicolinate + NAD(+) + H2O = (2S,4S)-4-hydroxy-2,3,4,5-tetrahydrodipicolinate + NADH + H(+). The enzyme catalyses (S)-2,3,4,5-tetrahydrodipicolinate + NADP(+) + H2O = (2S,4S)-4-hydroxy-2,3,4,5-tetrahydrodipicolinate + NADPH + H(+). It functions in the pathway amino-acid biosynthesis; L-lysine biosynthesis via DAP pathway; (S)-tetrahydrodipicolinate from L-aspartate: step 4/4. Catalyzes the conversion of 4-hydroxy-tetrahydrodipicolinate (HTPA) to tetrahydrodipicolinate. The sequence is that of 4-hydroxy-tetrahydrodipicolinate reductase from Ehrlichia chaffeensis (strain ATCC CRL-10679 / Arkansas).